We begin with the raw amino-acid sequence, 519 residues long: ATP synthase subunit alpha (519 aa).

ATP is bound at residue 174-181 (GDRQTGKT).

Belongs to the ATPase alpha/beta chains family. In terms of assembly, F-type ATPases have 2 components, CF(1) - the catalytic core - and CF(0) - the membrane proton channel. CF(1) has five subunits: alpha(3), beta(3), gamma(1), delta(1), epsilon(1). CF(0) has three main subunits: a(1), b(2) and c(9-12). The alpha and beta chains form an alternating ring which encloses part of the gamma chain. CF(1) is attached to CF(0) by a central stalk formed by the gamma and epsilon chains, while a peripheral stalk is formed by the delta and b chains.

The protein resides in the cell inner membrane. It catalyses the reaction ATP + H2O + 4 H(+)(in) = ADP + phosphate + 5 H(+)(out). Its function is as follows. Produces ATP from ADP in the presence of a proton gradient across the membrane. The alpha chain is a regulatory subunit. The chain is ATP synthase subunit alpha from Acidovorax ebreus (strain TPSY) (Diaphorobacter sp. (strain TPSY)).